A 345-amino-acid polypeptide reads, in one-letter code: Mitochondrial metalloendopeptidase OMA1 (345 aa).

Residues 1-67 are Mitochondrial matrix-facing; the sequence is MLRNIIRFKG…ILLDKSSRKY (67 aa). Residues 68-88 form a helical membrane-spanning segment; it reads LALLFGGCSLFYYTHLDKAPV. Over 89–345 the chain is Mitochondrial intermembrane; it reads SDRSRFIWVS…GNYYKSFFSM (257 aa). Histidine 203 serves as a coordination point for Zn(2+). Residue glutamate 204 is part of the active site. Zn(2+) is bound by residues histidine 207 and glutamate 257. A disulfide bond links cysteine 272 and cysteine 332. A required for protease activation region spans residues 314–345; sequence ENMSKWLPKANEIYEQSDCSSMGNYYKSFFSM.

Belongs to the peptidase M48 family. In terms of assembly, homooligomer. Zn(2+) serves as cofactor. Forms a redox-dependent disulfide bond, which plays a structural role and regulates its conformational stability and activity.

It localises to the mitochondrion inner membrane. With respect to regulation, protease activity is induced in response to various mitochondrial stress, such as changes in membrane potential, oxidative stress or chronic hyperpolarization, and depends on its C-terminal region. Protease that is part of the quality control system in the inner membrane of mitochondria. Activated in response to various mitochondrial stress, leading to the proteolytic cleavage of target proteins, such as OXA1 and COX1. Cleaves and thereby promotes the turnover of mistranslated or misfolded membrane proteins. Cleaves the misfolded multi-pass membrane protein OXA1. Involved in quality control of cytochrome oxidase assembly: mediates the cleavage of COX1 in cells lacking COA2. Required for the stability of the respiratory supercomplexes. Required for TOR signaling. The polypeptide is Mitochondrial metalloendopeptidase OMA1 (Saccharomyces cerevisiae (strain ATCC 204508 / S288c) (Baker's yeast)).